Reading from the N-terminus, the 359-residue chain is 4-galactosyl-N-acetylglucosaminide 3-alpha-L-fucosyltransferase FUT6 (359 aa).

Topologically, residues 1–14 (MDPLGPAKPQWSWR) are cytoplasmic. The helical; Signal-anchor for type II membrane protein transmembrane segment at 15 to 34 (CCLTTLLFQLLVAVCFFSYL) threads the bilayer. Over 35-359 (RVSRDDPTVY…QTRSIAAWFT (325 aa)) the chain is Lumenal. 4 N-linked (GlcNAc...) asparagine glycosylation sites follow: asparagine 46, asparagine 91, asparagine 153, and asparagine 184. The segment at 73–112 (KPIALPRCSEMVPGTADCNITADRKVYPQADAVIVHHREV) is determines site-specific fucosylation.

It belongs to the glycosyltransferase 10 family. As to quaternary structure, homodimer and monomer. Monomer (secreted form). Post-translationally, N-glycosylated. In terms of processing, proteolytic cleavage releases a secreted glycoform of 43 kDa.

It localises to the golgi apparatus. It is found in the golgi stack membrane. The protein resides in the secreted. The enzyme catalyses a beta-D-galactosyl-(1-&gt;4)-N-acetyl-beta-D-glucosaminyl derivative + GDP-beta-L-fucose = a beta-D-galactosyl-(1-&gt;4)-[alpha-L-fucosyl-(1-&gt;3)]-N-acetyl-beta-D-glucosaminyl derivative + GDP + H(+). It carries out the reaction an N-acetyl-alpha-neuraminyl-(2-&gt;3)-beta-D-galactosyl-(1-&gt;4)-N-acetyl-beta-D-glucosaminyl derivative + GDP-beta-L-fucose = an alpha-Neu5Ac-(2-&gt;3)-beta-D-Gal-(1-&gt;4)-[alpha-L-Fuc-(1-&gt;3)]-beta-D-GlcNAc derivative + GDP + H(+). The catalysed reaction is an alpha-Neu5Ac-(2-&gt;3)-beta-D-Gal-(1-&gt;4)-beta-D-GlcNAc-(1-&gt;3)-beta-D-Gal-(1-&gt;4)-[alpha-L-Fuc-(1-&gt;3)]-beta-D-GlcNAc derivative + GDP-beta-L-fucose = an alpha-Neu5Ac-(2-&gt;3)-beta-D-Gal-(1-&gt;4)-[alpha-L-Fuc-(1-&gt;3)]-beta-D-GlcNAc-(1-&gt;3)-beta-D-Gal-(1-&gt;4)-[alpha-L-Fuc-(1-&gt;3)]-beta-D-GlcNAc derivative + GDP + H(+). It catalyses the reaction a neolactoside nLc6Cer + GDP-beta-L-fucose = beta-D-Gal-(1-&gt;4)-[alpha-L-Fuc-(1-&gt;3)]-beta-D-GlcNAc-(1-&gt;3)-beta-D-Gal-(1-&gt;4)-beta-D-GlcNAc-(1-&gt;3)-beta-D-Gal-(1-&gt;4)-beta-D-Glc-(1&lt;-&gt;1')-Cer + GDP + H(+). The enzyme catalyses a neolactoside nLc6Cer + GDP-beta-L-fucose = beta-D-galactosyl-(1-&gt;4)-N-acetyl-beta-D-glucosaminyl-(1-&gt;3)-beta-D-galactosyl-(1-&gt;4)-[alpha-L-fucosyl-(1-&gt;3)]-N-acetyl-beta-D-glucosaminyl-(1-&gt;3)-beta-D-galactosyl-(1-&gt;4)-beta-D-glucosyl-(1&lt;-&gt;1')-ceramide + GDP + H(+). It carries out the reaction a neolactoside VI(3)-alpha-NeuNAc-nLc6Cer + GDP-beta-L-fucose = a neolactoside VI(3)-alpha-NeuAc,V(3)-alphaFuc-nLc6Cer + GDP + H(+). The catalysed reaction is beta-D-galactosyl-(1-&gt;4)-N-acetyl-D-glucosamine + GDP-beta-L-fucose = beta-D-galactosyl-(1-&gt;4)-[alpha-L-fucosyl-(1-&gt;3)]-N-acetyl-D-glucosamine + GDP + H(+). It catalyses the reaction N-acetyl-alpha-neuraminosyl-(2-&gt;3)-beta-D-galactosyl-(1-&gt;4)-N-acetyl-beta-D-glucosamine + GDP-beta-L-fucose = N-acetyl-alpha-neuraminosyl-(2-&gt;3)-beta-D-galactosyl-(1-&gt;4)-[alpha-L-fucosyl-(1-&gt;3)]-N-acetyl-beta-D-glucosamine + GDP + H(+). The enzyme catalyses lactose + GDP-beta-L-fucose = beta-D-galactosyl-(1-&gt;4)-[alpha-L-fucosyl-(1-&gt;3)]-D-glucose + GDP + H(+). It carries out the reaction alpha-L-Fuc-(1-&gt;2)-beta-D-Gal-(1-&gt;4)-D-Glc + GDP-beta-L-fucose = alpha-L-Fuc-(1-&gt;2)-beta-D-Gal-(1-&gt;4)-[alpha-L-Fuc-(1-&gt;3)]-D-Glc + GDP + H(+). The catalysed reaction is a beta-D-galactosyl-(1-&gt;4)-N-acetyl-beta-D-6-sulfooxy-glucosaminyl derivative + GDP-beta-L-fucose = a beta-D-galactosyl-(1-&gt;4)-[alpha-L-fucosyl-(1-&gt;3)]-N-acetyl-beta-D-6-sulfooxy-glucosaminyl derivative + GDP + H(+). Its pathway is protein modification; protein glycosylation. Catalyzes the transfer of L-fucose, from a guanosine diphosphate-beta-L-fucose, to the N-acetyl glucosamine (GlcNAc) of a distal alpha2,3 sialylated lactosamine unit of a glycoprotein- or glycolipid-linked sialopolylactosamines chain or of a distal or internal lactosamine unit of a neutral glycoprotein- or glycolipid-linked polylactosamines chain through an alpha-1,3 glycosidic linkage and participates in surface expression of the sialyl Lewis X (sLe(x)), Lewis X (Le(x)) and non sialylated VIM2 determinants. Moreover transfers fucose to H-type 2 (Fucalpha1-2Galbeta1-4GlcNAc) chain acceptor substrates and participates in difucosylated sialyl Lewis x determinants. Also fucosylates a polylactosamine substrate having a 6 sulfate modification at the GlcNAc moiety and gives rise to sialyl and non-sialyl 6-sulfo lewis X. Does not have activity towards type 1 ((Galbeta1-3GlcNAc)) and H-type 1 chain (Fucalpha1-2Galbeta1-3GlcNAc) acceptors substrates. This Pan troglodytes (Chimpanzee) protein is 4-galactosyl-N-acetylglucosaminide 3-alpha-L-fucosyltransferase FUT6.